An 801-amino-acid polypeptide reads, in one-letter code: Phenylalanine--tRNA ligase beta subunit (801 aa).

The 114-residue stretch at 39-152 (ARAFSGVVVG…TDAPIGTDIR (114 aa)) folds into the tRNA-binding domain. The B5 domain maps to 407 to 482 (PARAPITLPI…RIYGYDNIPS (76 aa)). Residues D460, D466, E469, and E470 each contribute to the Mg(2+) site. The FDX-ACB domain maps to 706-799 (SKFPQVRRDI…LTVEHSAQLR (94 aa)).

Belongs to the phenylalanyl-tRNA synthetase beta subunit family. Type 1 subfamily. In terms of assembly, tetramer of two alpha and two beta subunits. Mg(2+) serves as cofactor.

It is found in the cytoplasm. The enzyme catalyses tRNA(Phe) + L-phenylalanine + ATP = L-phenylalanyl-tRNA(Phe) + AMP + diphosphate + H(+). The chain is Phenylalanine--tRNA ligase beta subunit from Psychrobacter arcticus (strain DSM 17307 / VKM B-2377 / 273-4).